The primary structure comprises 165 residues: Phosphopantetheine adenylyltransferase (165 aa).

S10 lines the substrate pocket. ATP is bound by residues S10 to F11 and H18. Substrate is bound by residues K42, L74, and R88. ATP contacts are provided by residues G89–R91, E99, and Y124–S130.

Belongs to the bacterial CoaD family. As to quaternary structure, homohexamer. It depends on Mg(2+) as a cofactor.

The protein resides in the cytoplasm. The enzyme catalyses (R)-4'-phosphopantetheine + ATP + H(+) = 3'-dephospho-CoA + diphosphate. It functions in the pathway cofactor biosynthesis; coenzyme A biosynthesis; CoA from (R)-pantothenate: step 4/5. Reversibly transfers an adenylyl group from ATP to 4'-phosphopantetheine, yielding dephospho-CoA (dPCoA) and pyrophosphate. The chain is Phosphopantetheine adenylyltransferase from Macrococcus caseolyticus (strain JCSC5402) (Macrococcoides caseolyticum).